A 537-amino-acid chain; its full sequence is Cytochrome c oxidase subunit 1 (537 aa).

A helical membrane pass occupies residues 22-42 (ILYLLFGLVSGIIGSVFSFII). Ca(2+) is bound by residues E45, A48, and G50. A Fe(II)-heme a-binding site is contributed by H68. 8 consecutive transmembrane segments (helical) span residues 70-90 (ILMI…NYLV), 104-124 (VNNF…ISAL), 152-172 (LAIL…VNLI), 190-210 (LFAW…PVLA), 241-261 (LFWF…FGVV), 279-299 (MLWA…HHLF), 318-338 (IAIP…GGAI), and 345-365 (MLYA…GVIL). Residue H247 coordinates Cu cation. The segment at residues 247–251 (HPEVY) is a cross-link (1'-histidyl-3'-tyrosine (His-Tyr)). Y251 is a binding site for O2. Residues H296 and H297 each contribute to the Cu cation site. Mg(2+) contacts are provided by H375 and D376. A run of 2 helical transmembrane segments spans residues 379–399 (FVVA…LCGA) and 418–438 (IQFW…HFLG). H383 is a heme a3 binding site. H385 provides a ligand contact to Fe(II)-heme a. P447 contributes to the Ca(2+) binding site. Residues 458–478 (FVSSIGSVISILSLFLFMYVM) traverse the membrane as a helical segment.

It belongs to the heme-copper respiratory oxidase family. Component of the cytochrome c oxidase (complex IV, CIV), a multisubunit enzyme composed of a catalytic core of 3 subunits and several supernumerary subunits. The complex exists as a monomer or a dimer and forms supercomplexes (SCs) in the inner mitochondrial membrane with ubiquinol-cytochrome c oxidoreductase (cytochrome b-c1 complex, complex III, CIII). The cofactor is heme. Cu cation serves as cofactor.

Its subcellular location is the mitochondrion inner membrane. It carries out the reaction 4 Fe(II)-[cytochrome c] + O2 + 8 H(+)(in) = 4 Fe(III)-[cytochrome c] + 2 H2O + 4 H(+)(out). Its pathway is energy metabolism; oxidative phosphorylation. Its function is as follows. Component of the cytochrome c oxidase, the last enzyme in the mitochondrial electron transport chain which drives oxidative phosphorylation. The respiratory chain contains 3 multisubunit complexes succinate dehydrogenase (complex II, CII), ubiquinol-cytochrome c oxidoreductase (cytochrome b-c1 complex, complex III, CIII) and cytochrome c oxidase (complex IV, CIV), that cooperate to transfer electrons derived from NADH and succinate to molecular oxygen, creating an electrochemical gradient over the inner membrane that drives transmembrane transport and the ATP synthase. Cytochrome c oxidase is the component of the respiratory chain that catalyzes the reduction of oxygen to water. Electrons originating from reduced cytochrome c in the intermembrane space (IMS) are transferred via the dinuclear copper A center (CU(A)) of subunit 2 and heme A of subunit 1 to the active site in subunit 1, a binuclear center (BNC) formed by heme A3 and copper B (CU(B)). The BNC reduces molecular oxygen to 2 water molecules using 4 electrons from cytochrome c in the IMS and 4 protons from the mitochondrial matrix. The chain is Cytochrome c oxidase subunit 1 (cox1) from Schizosaccharomyces pombe (strain 972 / ATCC 24843) (Fission yeast).